The following is a 282-amino-acid chain: ADP-ribosyl cyclase/cyclic ADP-ribose hydrolase (282 aa).

The signal sequence occupies residues 1-24 (MSPVAIIACVCLAVTLTSISPSEA). Disulfide bonds link Cys39–Cys58, Cys75–Cys155, Cys136–Cys149, Cys230–Cys251, and Cys263–Cys272.

Belongs to the ADP-ribosyl cyclase family. Has different isoforms which may be the result of different amounts of phosphorylation. In terms of tissue distribution, immature occoyctes. Oocytes.

It is found in the cytoplasmic vesicle. It catalyses the reaction NAD(+) = cyclic ADP-beta-D-ribose + nicotinamide + H(+). It carries out the reaction nicotinate + NADP(+) = nicotinate-adenine dinucleotide phosphate + nicotinamide. The catalysed reaction is 2'-phospho-cyclic ADP-ribose + nicotinate = nicotinate-adenine dinucleotide phosphate. Its activity is regulated as follows. Activity is presumably regulated by its sequestration in vesicles before egg fertilization. After fertilization and upon NADase release, it could then be regulated via its potential phosphorylation sites. Functionally, synthesizes cyclic ADP-ribose (cADPR), a second messenger for calcium mobilization from endoplasmic reticulum; ADP-ribose is a minor product. Synthesizes the Ca(2+) mobilizer nicotinate-adenine dinucleotide phosphate from 2'-phospho-cADPR and nicotinic acid as well as from NADP(+) and nicotinic acid; with NADP(+) as substrate preferentially catalyzes NADP(+) hydrolysis rather than NAADP(+) synthesis, about 70-fold better at pH 7.4. Has cADPR hydrolase activity at very high enzyme concentrations, which is probably not physiological. The conversion of NAD(+) into ADP-ribose is also only observed at high enzyme concentrations and results from the hydrolysis of cADP-ribose. The protein is ADP-ribosyl cyclase/cyclic ADP-ribose hydrolase of Aplysia californica (California sea hare).